The chain runs to 307 residues: Putative F-box/LRR-repeat protein 22 (307 aa).

Residues methionine 1–leucine 15 are compositionally biased toward polar residues. The segment at methionine 1 to asparagine 26 is disordered. The region spanning proline 24–isoleucine 71 is the F-box domain. 5 LRR repeats span residues tryptophan 108–glycine 133, tyrosine 158–glycine 183, tryptophan 185–leucine 210, serine 212–glutamine 237, and phenylalanine 244–tyrosine 270. A compositionally biased stretch (acidic residues) spans isoleucine 279–asparagine 289. The segment at isoleucine 279–phenylalanine 307 is disordered.

The sequence is that of Putative F-box/LRR-repeat protein 22 (FBL22) from Arabidopsis thaliana (Mouse-ear cress).